We begin with the raw amino-acid sequence, 264 residues long: Methionine aminopeptidase (264 aa).

Residue His79 participates in substrate binding. 3 residues coordinate a divalent metal cation: Asp97, Asp108, and His171. Residue His178 participates in substrate binding. A divalent metal cation is bound by residues Glu204 and Glu235.

Belongs to the peptidase M24A family. Methionine aminopeptidase type 1 subfamily. Monomer. Co(2+) serves as cofactor. The cofactor is Zn(2+). Mn(2+) is required as a cofactor. Requires Fe(2+) as cofactor.

The enzyme catalyses Release of N-terminal amino acids, preferentially methionine, from peptides and arylamides.. Removes the N-terminal methionine from nascent proteins. The N-terminal methionine is often cleaved when the second residue in the primary sequence is small and uncharged (Met-Ala-, Cys, Gly, Pro, Ser, Thr, or Val). Requires deformylation of the N(alpha)-formylated initiator methionine before it can be hydrolyzed. In Salmonella typhi, this protein is Methionine aminopeptidase.